The chain runs to 302 residues: Succinate--CoA ligase [ADP-forming] subunit alpha (302 aa).

CoA is bound by residues 17-20 (TGST), lysine 43, and 96-98 (ITE). Tyrosine 159 provides a ligand contact to substrate. The active-site Tele-phosphohistidine intermediate is the histidine 247.

This sequence belongs to the succinate/malate CoA ligase alpha subunit family. In terms of assembly, heterotetramer of two alpha and two beta subunits.

The enzyme catalyses succinate + ATP + CoA = succinyl-CoA + ADP + phosphate. It carries out the reaction GTP + succinate + CoA = succinyl-CoA + GDP + phosphate. The protein operates within carbohydrate metabolism; tricarboxylic acid cycle; succinate from succinyl-CoA (ligase route): step 1/1. Functionally, succinyl-CoA synthetase functions in the citric acid cycle (TCA), coupling the hydrolysis of succinyl-CoA to the synthesis of either ATP or GTP and thus represents the only step of substrate-level phosphorylation in the TCA. The alpha subunit of the enzyme binds the substrates coenzyme A and phosphate, while succinate binding and nucleotide specificity is provided by the beta subunit. This is Succinate--CoA ligase [ADP-forming] subunit alpha from Staphylococcus aureus (strain COL).